A 63-amino-acid polypeptide reads, in one-letter code: MANPKAKMSKSRRDKRRAQFNARTKPATTVNCPNCGEPTLPHRACRHCGHYRGRCVVNKLAKS.

The interval 1–27 is disordered; that stretch reads MANPKAKMSKSRRDKRRAQFNARTKPA. Positions 7-18 are enriched in basic residues; it reads KMSKSRRDKRRA.

This sequence belongs to the bacterial ribosomal protein bL32 family.

The polypeptide is Large ribosomal subunit protein bL32 (Pelodictyon phaeoclathratiforme (strain DSM 5477 / BU-1)).